We begin with the raw amino-acid sequence, 78 residues long: MIKLVLLVAAIAIFGTGFITVIINQFTSAKNIIMDLYNSDTWLIWLFGRMAVLFSHPLMLTISSLYIVGFIVSKTLYS.

The signal sequence occupies residues 1 to 29 (MIKLVLLVAAIAIFGTGFITVIINQFTSA). A helical membrane pass occupies residues 52–72 (VLFSHPLMLTISSLYIVGFIV).

Belongs to the plectrovirus ORF9 family. As to quaternary structure, homomultimerizes.

It localises to the virion. Its subcellular location is the host membrane. Functionally, may self assemble to form a helical capsid wrapping up the viral genomic DNA. The virion assembly and budding take place at the host inner membrane. In Spiroplasma virus SpV1-C74 (SpV1), this protein is Putative capsid protein ORF9.